We begin with the raw amino-acid sequence, 1141 residues long: Sterol regulatory element-binding protein 2 (1141 aa).

Residues Met-1 to Leu-50 are transcriptional activation (acidic). The Cytoplasmic portion of the chain corresponds to Met-1 to Arg-479. Residues Glu-48–Gln-144 are disordered. Low complexity predominate over residues Ser-63–Gly-82. Over residues Val-88 to Leu-97 the composition is skewed to polar residues. The segment covering Pro-98–Pro-110 has biased composition (low complexity). The span at Val-114–Arg-126 shows a compositional bias: polar residues. The interaction with LMNA stretch occupies residues Gln-237–Cys-491. Positions Glu-330–Leu-380 constitute a bHLH domain. A leucine-zipper region spans residues Leu-380–Asn-401. A Glycyl lysine isopeptide (Lys-Gly) (interchain with G-Cter in SUMO2) cross-link involves residue Lys-464. A helical transmembrane segment spans residues Ser-480–Leu-500. Over Leu-501–Asp-533 the chain is Lumenal. A helical membrane pass occupies residues Trp-534–Val-554. Residues Lys-555 to Ala-1139 are Cytoplasmic-facing. Phosphoserine occurs at positions 855 and 1098.

The protein belongs to the SREBP family. In terms of assembly, forms a tight complex with SCAP, the SCAP-SREBP complex, in the endoplasmic reticulum membrane and the Golgi apparatus. Interacts with PAQR3; the interaction anchors the SCAP-SREBP complex to the Golgi apparatus in low cholesterol conditions. Interacts (via C-terminal domain) with RNF139. Homodimer; efficient DNA binding of the soluble transcription factor fragment requires dimerization with another bHLH protein. Interacts with LMNA. In terms of processing, processed in the Golgi apparatus, releasing the protein from the membrane. At low cholesterol the SCAP-SREBP complex is recruited into COPII vesicles for export from the endoplasmic reticulum. In the Golgi, complex SREBPs are cleaved sequentially by site-1 (MBTPS1, S1P) and site-2 (MBTPS2, S2P) protease. The first cleavage by site-1 protease occurs within the luminal loop, the second cleavage by site-2 protease occurs within the first transmembrane domain, releasing the transcription factor from the Golgi membrane. Apoptosis triggers cleavage by the cysteine proteases caspase-3 and caspase-7. Cleavage and activation is induced by mediated cholesterol efflux. Post-translationally, phosphorylated by AMPK, leading to suppress protein processing and nuclear translocation, and repress target gene expression. SCAP-free SREBF2 is ubiquitinated by the BCR(ARMC5) complex, leading to its degradation. In terms of processing, ubiquitinated; the nuclear form has a rapid turnover and is rapidly ubiquitinated and degraded by the proteasome in the nucleus. In terms of tissue distribution, ubiquitously expressed in adult and fetal tissues.

The protein resides in the endoplasmic reticulum membrane. Its subcellular location is the golgi apparatus membrane. It is found in the cytoplasmic vesicle. The protein localises to the COPII-coated vesicle membrane. It localises to the nucleus. With respect to regulation, activation by cleavage is down-regulated upon activation of SIRT3-dependent PRKAA1/AMPK-alpha signaling cascade which leads to inhibition of ATP-consuming lipogenesis to restore cellular energy balance. Its function is as follows. Precursor of the transcription factor form (Processed sterol regulatory element-binding protein 2), which is embedded in the endoplasmic reticulum membrane. Low sterol concentrations promote processing of this form, releasing the transcription factor form that translocates into the nucleus and activates transcription of genes involved in cholesterol biosynthesis. Functionally, key transcription factor that regulates expression of genes involved in cholesterol biosynthesis. Binds to the sterol regulatory element 1 (SRE-1) (5'-ATCACCCCAC-3'). Has dual sequence specificity binding to both an E-box motif (5'-ATCACGTGA-3') and to SRE-1 (5'-ATCACCCCAC-3'). Regulates transcription of genes related to cholesterol synthesis pathway. This Homo sapiens (Human) protein is Sterol regulatory element-binding protein 2.